The following is a 614-amino-acid chain: Replication protein A 70 kDa DNA-binding subunit (614 aa).

The interval 112–178 (GNPVPYNEGQ…SSVKTPGGTQ (67 aa)) is disordered. 2 stretches are compositionally biased toward polar residues: residues 120–130 (GQGQQRSSAPT) and 158–178 (PSNQ…GGTQ). Positions 194–278 (WTICARVTQK…VKNDYEITFN (85 aa)) form a DNA-binding region, OB. The C4-type zinc-finger motif lies at 478 to 500 (CPSQDCNKKVIDQQNGLYRCEKC).

This sequence belongs to the replication factor A protein 1 family. In terms of assembly, component of the heterotrimeric canonical replication protein A complex (RPA).

It localises to the nucleus. Its subcellular location is the PML body. Functionally, as part of the heterotrimeric replication protein A complex (RPA/RP-A), binds and stabilizes single-stranded DNA intermediates, that form during DNA replication or upon DNA stress. It prevents their reannealing and in parallel, recruits and activates different proteins and complexes involved in DNA metabolism. Thereby, it plays an essential role both in DNA replication and the cellular response to DNA damage. In Gallus gallus (Chicken), this protein is Replication protein A 70 kDa DNA-binding subunit (RPA1).